The primary structure comprises 850 residues: DNA polymerase I (850 aa).

The 5'-3' exonuclease domain occupies 1–288; the sequence is MKLVIFDGNS…SIIKRLGLSE (288 aa). The tract at residues 470–850 is polymerase; that stretch reads VDRDALIQYT…KEGLNWYETK (381 aa).

The protein belongs to the DNA polymerase type-A family.

The catalysed reaction is DNA(n) + a 2'-deoxyribonucleoside 5'-triphosphate = DNA(n+1) + diphosphate. Its function is as follows. In addition to polymerase activity, this DNA polymerase exhibits 3'-5' and 5'-3' exonuclease activity. This is DNA polymerase I (polA) from Caldicellulosiruptor bescii (strain ATCC BAA-1888 / DSM 6725 / KCTC 15123 / Z-1320) (Anaerocellum thermophilum).